The primary structure comprises 409 residues: Tyrosine--tRNA ligase (409 aa).

The short motif at 54–63 (PTAPDIHLGH) is the 'HIGH' region element. The 'KMSKS' region motif lies at 238 to 242 (KMSKS). Residue lysine 241 coordinates ATP. The 61-residue stretch at 347 to 407 (QGILRILREA…GKRKFARVKL (61 aa)) folds into the S4 RNA-binding domain.

Belongs to the class-I aminoacyl-tRNA synthetase family. TyrS type 2 subfamily. As to quaternary structure, homodimer.

It is found in the cytoplasm. The enzyme catalyses tRNA(Tyr) + L-tyrosine + ATP = L-tyrosyl-tRNA(Tyr) + AMP + diphosphate + H(+). In terms of biological role, catalyzes the attachment of tyrosine to tRNA(Tyr) in a two-step reaction: tyrosine is first activated by ATP to form Tyr-AMP and then transferred to the acceptor end of tRNA(Tyr). This chain is Tyrosine--tRNA ligase, found in Bordetella bronchiseptica (strain ATCC BAA-588 / NCTC 13252 / RB50) (Alcaligenes bronchisepticus).